Consider the following 40-residue polypeptide: Large ribosomal subunit protein bL33c (40 aa).

The protein belongs to the bacterial ribosomal protein bL33 family.

The protein resides in the plastid. The protein localises to the chloroplast. In Pisum sativum (Garden pea), this protein is Large ribosomal subunit protein bL33c (rpl33).